Reading from the N-terminus, the 272-residue chain is Indole-3-glycerol phosphate synthase (272 aa).

The protein belongs to the TrpC family.

It carries out the reaction 1-(2-carboxyphenylamino)-1-deoxy-D-ribulose 5-phosphate + H(+) = (1S,2R)-1-C-(indol-3-yl)glycerol 3-phosphate + CO2 + H2O. It functions in the pathway amino-acid biosynthesis; L-tryptophan biosynthesis; L-tryptophan from chorismate: step 4/5. This is Indole-3-glycerol phosphate synthase from Mycolicibacterium smegmatis (strain ATCC 700084 / mc(2)155) (Mycobacterium smegmatis).